Reading from the N-terminus, the 159-residue chain is NADH dehydrogenase [ubiquinone] 1 beta subcomplex subunit 10 (159 aa).

The protein belongs to the complex I NDUFB10 subunit family. In terms of assembly, complex I is composed of 45 different subunits.

It is found in the mitochondrion inner membrane. Functionally, accessory subunit of the mitochondrial membrane respiratory chain NADH dehydrogenase (Complex I), that is believed not to be involved in catalysis. Complex I functions in the transfer of electrons from NADH to the respiratory chain. The immediate electron acceptor for the enzyme is believed to be ubiquinone. The protein is NADH dehydrogenase [ubiquinone] 1 beta subcomplex subunit 10 of Bombyx mori (Silk moth).